A 239-amino-acid chain; its full sequence is tRNA (guanine-N(7)-)-methyltransferase (239 aa).

Positions 69, 94, 121, and 144 each coordinate S-adenosyl-L-methionine. D144 is an active-site residue. Position 148 (K148) interacts with substrate. An interaction with RNA region spans residues 150–155 (RHNKRR). Substrate contacts are provided by residues D180 and 217–220 (TKFE).

Belongs to the class I-like SAM-binding methyltransferase superfamily. TrmB family. Monomer.

It catalyses the reaction guanosine(46) in tRNA + S-adenosyl-L-methionine = N(7)-methylguanosine(46) in tRNA + S-adenosyl-L-homocysteine. The protein operates within tRNA modification; N(7)-methylguanine-tRNA biosynthesis. Catalyzes the formation of N(7)-methylguanine at position 46 (m7G46) in tRNA. The polypeptide is tRNA (guanine-N(7)-)-methyltransferase (Yersinia enterocolitica serotype O:8 / biotype 1B (strain NCTC 13174 / 8081)).